Consider the following 106-residue polypeptide: ATP-dependent Clp protease adapter protein ClpS (106 aa).

Residues 1–13 (MPRKTSHEHDHGL) are compositionally biased toward basic and acidic residues. A disordered region spans residues 1-21 (MPRKTSHEHDHGLVVETSKPE).

It belongs to the ClpS family. As to quaternary structure, binds to the N-terminal domain of the chaperone ClpA.

Functionally, involved in the modulation of the specificity of the ClpAP-mediated ATP-dependent protein degradation. The protein is ATP-dependent Clp protease adapter protein ClpS of Xanthomonas campestris pv. campestris (strain 8004).